A 401-amino-acid polypeptide reads, in one-letter code: SVP1-like protein 2 (401 aa).

2 WD repeats span residues 222–262 (AHKN…LIHE) and 267–306 (LDRA…DKRH).

It belongs to the WD repeat PROPPIN family.

It localises to the vacuole membrane. Its subcellular location is the cytoplasmic vesicle membrane. Involved in mitochondrial or peroxisomal functions and amino acid signaling pathways. The protein is SVP1-like protein 2 (HSV2) of Eremothecium gossypii (strain ATCC 10895 / CBS 109.51 / FGSC 9923 / NRRL Y-1056) (Yeast).